The primary structure comprises 418 residues: STE20-related kinase adapter protein beta (418 aa).

The region spanning 58-369 (YELQVEIGRG…ASSLLSHVFF (312 aa)) is the Protein kinase domain. ATP-binding positions include 64 to 72 (IGRGFDNLT) and lysine 89.

Belongs to the protein kinase superfamily. STE Ser/Thr protein kinase family. STE20 subfamily. In terms of assembly, component of a trimeric complex composed of STK11/LKB1, STRAD (STRADA or STRADB) and CAB39/MO25 (CAB39/MO25alpha or CAB39L/MO25beta): the complex tethers STK11/LKB1 in the cytoplasm and stimulates its catalytic activity. Interacts with BIRC4/XIAP. These two proteins are likely to coexist in a complex with TAK1, TRAF6, TAB1 and TAB2.

The protein localises to the nucleus. It is found in the cytoplasm. Functionally, pseudokinase which, in complex with CAB39/MO25 (CAB39/MO25alpha or CAB39L/MO25beta), binds to and activates STK11/LKB1. Adopts a closed conformation typical of active protein kinases and binds STK11/LKB1 as a pseudosubstrate, promoting conformational change of STK11/LKB1 in an active conformation. This Mus musculus (Mouse) protein is STE20-related kinase adapter protein beta (Stradb).